We begin with the raw amino-acid sequence, 211 residues long: Ubiquitin-conjugating enzyme E2 S (211 aa).

Residues 11-157 form the UBC core domain; that stretch reads HVIRQVYKEV…ARLMTEIHAH (147 aa). Cys-95 functions as the Glycyl thioester intermediate in the catalytic mechanism. Positions 157–167 are enriched in basic and acidic residues; that stretch reads HSSSLRGKDPT. Residues 157-211 form a disordered region; that stretch reads HSSSLRGKDPTDPCSSASVTGALGDGPMAKKHAGDRDKKLAAKKKTDKKRALRRL. Positions 197–211 are enriched in basic residues; that stretch reads AAKKKTDKKRALRRL.

Belongs to the ubiquitin-conjugating enzyme family.

The enzyme catalyses S-ubiquitinyl-[E1 ubiquitin-activating enzyme]-L-cysteine + [E2 ubiquitin-conjugating enzyme]-L-cysteine = [E1 ubiquitin-activating enzyme]-L-cysteine + S-ubiquitinyl-[E2 ubiquitin-conjugating enzyme]-L-cysteine.. It participates in protein modification; protein ubiquitination. Functionally, catalyzes the covalent attachment of ubiquitin to other proteins. Acts as an essential factor of the anaphase promoting complex/cyclosome (APC/C), a cell cycle-regulated ubiquitin ligase that controls progression through mitosis. Acts by specifically elongating 'Lys-11'-linked polyubiquitin chains initiated by the E2 enzyme ube2c/ubch10 on APC/C substrates, enhancing the degradation of APC/C substrates by the proteasome and promoting mitotic exit. The polypeptide is Ubiquitin-conjugating enzyme E2 S (ube2s) (Aquarana catesbeiana (American bullfrog)).